The sequence spans 103 residues: Small ribosomal subunit protein uS10 (103 aa).

Belongs to the universal ribosomal protein uS10 family. As to quaternary structure, part of the 30S ribosomal subunit.

Functionally, involved in the binding of tRNA to the ribosomes. This Escherichia coli O127:H6 (strain E2348/69 / EPEC) protein is Small ribosomal subunit protein uS10.